We begin with the raw amino-acid sequence, 145 residues long: Transcription antitermination protein NusB (145 aa).

It belongs to the NusB family.

Functionally, involved in transcription antitermination. Required for transcription of ribosomal RNA (rRNA) genes. Binds specifically to the boxA antiterminator sequence of the ribosomal RNA (rrn) operons. The sequence is that of Transcription antitermination protein NusB from Aromatoleum aromaticum (strain DSM 19018 / LMG 30748 / EbN1) (Azoarcus sp. (strain EbN1)).